The sequence spans 415 residues: UV excision repair protein RAD23 homolog B (415 aa).

The Ubiquitin-like domain occupies 1 to 79 (MQVTLKTLQQ…VVVMVTKPKA (79 aa)). Positions 80–175 (VTSAVPATTQ…STPGDSSRSN (96 aa)) are disordered. Residues 84-143 (VPATTQQSSSPSTTTVSSSPAAAVAQAPAPTPALAPTSTPASTTPASTTASSEPAPTGAT) are compositionally biased toward low complexity. A Phosphothreonine modification is found at Thr-155. Phosphoserine is present on residues Ser-160 and Ser-174. Position 186 is a phosphothreonine (Thr-186). Positions 188 to 228 (QSYENMVTEIMSMGYEREQVIAALRASFNNPDRAVEYLLMG) constitute a UBA 1 domain. At Ser-199 the chain carries Phosphoserine. Tyr-202 is modified (phosphotyrosine). The 44-residue stretch at 274-317 (HPLEFLRNQPQFQQMRQIIQQNPSLLPALLQQIGRENPQLLQQI) folds into the STI1 domain. The tract at residues 334–355 (EAGGQGGGGGGGGGGGGGGGGI) is disordered. Positions 336 to 355 (GGQGGGGGGGGGGGGGGGGI) are enriched in gly residues. Positions 370–410 (PQEKEAIERLKALGFPEGLVIQAYFACEKNENLAANFLLQQ) constitute a UBA 2 domain.

Belongs to the RAD23 family. As to quaternary structure, component of the XPC complex composed of XPC, RAD23B and CETN2. Interacts with NGLY1 and PSMC1. Interacts with ATXN3. Interacts with AMFR. Interacts with VCP; the interaction is indirect and mediated by NGLY1.

The protein localises to the nucleus. Its subcellular location is the cytoplasm. Functionally, multiubiquitin chain receptor involved in modulation of proteasomal degradation. Binds to polyubiquitin chains. Proposed to be capable to bind simultaneously to the 26S proteasome and to polyubiquitinated substrates and to deliver ubiquitinated proteins to the proteasome. May play a role in endoplasmic reticulum-associated degradation (ERAD) of misfolded glycoproteins by association with PNGase and delivering deglycosylated proteins to the proteasome. In terms of biological role, involved in global genome nucleotide excision repair (GG-NER) by acting as component of the XPC complex. Cooperatively with Cetn2 appears to stabilize Xpc. May protect Xpc from proteasomal degradation. Its function is as follows. The XPC complex is proposed to represent the first factor bound at the sites of DNA damage and together with other core recognition factors, Xpa, RPA and the TFIIH complex, is part of the pre-incision (or initial recognition) complex. The XPC complex recognizes a wide spectrum of damaged DNA characterized by distortions of the DNA helix such as single-stranded loops, mismatched bubbles or single-stranded overhangs. The orientation of XPC complex binding appears to be crucial for inducing a productive NER. XPC complex is proposed to recognize and to interact with unpaired bases on the undamaged DNA strand which is followed by recruitment of the TFIIH complex and subsequent scanning for lesions in the opposite strand in a 5'-to-3' direction by the NER machinery. Cyclobutane pyrimidine dimers (CPDs) which are formed upon UV-induced DNA damage esacpe detection by the XPC complex due to a low degree of structural perurbation. Instead they are detected by the UV-DDB complex which in turn recruits and cooperates with the XPC complex in the respective DNA repair. In vitro, the XPC:RAD23B dimer is sufficient to initiate NER; it preferentially binds to cisplatin and UV-damaged double-stranded DNA and also binds to a variety of chemically and structurally diverse DNA adducts. XPC:RAD23B contacts DNA both 5' and 3' of a cisplatin lesion with a preference for the 5' side. Xpc:Rad22b induces a bend in DNA upon binding. Xpc:Rad23b stimulates the activity of DNA glycosylases Tdg and Smug1. The chain is UV excision repair protein RAD23 homolog B (Rad23b) from Rattus norvegicus (Rat).